Here is a 794-residue protein sequence, read N- to C-terminus: DNA ligase (794 aa).

Residues 35–39 (DAEYD), 84–85 (SL), and Glu126 contribute to the NAD(+) site. Lys128 acts as the N6-AMP-lysine intermediate in catalysis. NAD(+) contacts are provided by Arg149, Glu186, Lys302, and Lys326. Zn(2+) is bound by residues Cys420, Cys423, Cys450, and Cys456. One can recognise a BRCT domain in the interval 711 to 794 (VEGLPLAGQT…KLLDEYGVAH (84 aa)).

This sequence belongs to the NAD-dependent DNA ligase family. LigA subfamily. It depends on Mg(2+) as a cofactor. The cofactor is Mn(2+).

The catalysed reaction is NAD(+) + (deoxyribonucleotide)n-3'-hydroxyl + 5'-phospho-(deoxyribonucleotide)m = (deoxyribonucleotide)n+m + AMP + beta-nicotinamide D-nucleotide.. Its function is as follows. DNA ligase that catalyzes the formation of phosphodiester linkages between 5'-phosphoryl and 3'-hydroxyl groups in double-stranded DNA using NAD as a coenzyme and as the energy source for the reaction. It is essential for DNA replication and repair of damaged DNA. In Pseudomonas paraeruginosa (strain DSM 24068 / PA7) (Pseudomonas aeruginosa (strain PA7)), this protein is DNA ligase.